The following is a 377-amino-acid chain: Lipoyl synthase, mitochondrial (377 aa).

The transit peptide at 1-77 (MFRRGGRILN…LPNGSVHKRL (77 aa)) directs the protein to the mitochondrion. Positions 107, 112, 118, 138, 142, 145, and 353 each coordinate [4Fe-4S] cluster. One can recognise a Radical SAM core domain in the interval 123–342 (DKTRATATIM…RKRAEELGFL (220 aa)).

This sequence belongs to the radical SAM superfamily. Lipoyl synthase family. Requires [4Fe-4S] cluster as cofactor.

The protein resides in the mitochondrion. The catalysed reaction is [[Fe-S] cluster scaffold protein carrying a second [4Fe-4S](2+) cluster] + N(6)-octanoyl-L-lysyl-[protein] + 2 oxidized [2Fe-2S]-[ferredoxin] + 2 S-adenosyl-L-methionine + 4 H(+) = [[Fe-S] cluster scaffold protein] + N(6)-[(R)-dihydrolipoyl]-L-lysyl-[protein] + 4 Fe(3+) + 2 hydrogen sulfide + 2 5'-deoxyadenosine + 2 L-methionine + 2 reduced [2Fe-2S]-[ferredoxin]. It functions in the pathway protein modification; protein lipoylation via endogenous pathway; protein N(6)-(lipoyl)lysine from octanoyl-[acyl-carrier-protein]: step 2/2. In terms of biological role, catalyzes the radical-mediated insertion of two sulfur atoms into the C-6 and C-8 positions of the octanoyl moiety bound to the lipoyl domains of lipoate-dependent enzymes, thereby converting the octanoylated domains into lipoylated derivatives. The sequence is that of Lipoyl synthase, mitochondrial from Schizosaccharomyces japonicus (strain yFS275 / FY16936) (Fission yeast).